The following is an 876-amino-acid chain: DNA double-strand break repair Rad50 ATPase (876 aa).

ATP contacts are provided by residues arginine 11, 31–37 (NGAGKTT), and glutamine 139. Coiled-coil stretches lie at residues 188–528 (RERV…EDRL) and 575–710 (SGVE…RKER). A Zinc-hook domain is found at 387–484 (EETLQSEYEE…RLESVRRELE (98 aa)). Zn(2+) is bound by residues cysteine 432 and cysteine 435.

This sequence belongs to the SMC family. RAD50 subfamily. Homodimer. Forms a heterotetramer composed of two Mre11 subunits and two Rad50 subunits. Requires Zn(2+) as cofactor.

Its function is as follows. Part of the Rad50/Mre11 complex, which is involved in the early steps of DNA double-strand break (DSB) repair. The complex may facilitate opening of the processed DNA ends to aid in the recruitment of HerA and NurA. Rad50 controls the balance between DNA end bridging and DNA resection via ATP-dependent structural rearrangements of the Rad50/Mre11 complex. The sequence is that of DNA double-strand break repair Rad50 ATPase from Methanopyrus kandleri (strain AV19 / DSM 6324 / JCM 9639 / NBRC 100938).